Reading from the N-terminus, the 613-residue chain is Glutaminase 1 (613 aa).

The glutaminase stretch occupies residues 33–315 (GAVADYIPEL…LSSHYDLHML (283 aa)). Residues serine 75, asparagine 124, glutamate 168, asparagine 175, tyrosine 199, tyrosine 251, and valine 269 each contribute to the substrate site. An STAS domain is found at 345–457 (REILAAHEQE…LDTAIEWAED (113 aa)). An a nucleoside 3',5'-cyclic phosphate-binding site is contributed by 480-595 (LLEGLSADEL…ERIMRNLAQL (116 aa)).

The protein belongs to the glutaminase family. In terms of assembly, homotetramer.

The catalysed reaction is L-glutamine + H2O = L-glutamate + NH4(+). This chain is Glutaminase 1 (glsA1), found in Bradyrhizobium diazoefficiens (strain JCM 10833 / BCRC 13528 / IAM 13628 / NBRC 14792 / USDA 110).